We begin with the raw amino-acid sequence, 251 residues long: L-ascorbate peroxidase 2, cytosolic (251 aa).

Catalysis depends on H43, which acts as the Proton acceptor. Residue H163 coordinates heme b. 5 residues coordinate K(+): T164, T180, N182, I185, and D187.

It belongs to the peroxidase family. Ascorbate peroxidase subfamily. Heme b serves as cofactor. As to expression, detected in bundle sheath cells, the photosynthetic cells that surround the phloem and xylem.

Its subcellular location is the cytoplasm. It carries out the reaction L-ascorbate + H2O2 = L-dehydroascorbate + 2 H2O. In terms of biological role, plays a key role in hydrogen peroxide removal. The polypeptide is L-ascorbate peroxidase 2, cytosolic (Arabidopsis thaliana (Mouse-ear cress)).